The primary structure comprises 115 residues: Ribonuclease P protein component (115 aa).

It belongs to the RnpA family. As to quaternary structure, consists of a catalytic RNA component (M1 or rnpB) and a protein subunit.

The enzyme catalyses Endonucleolytic cleavage of RNA, removing 5'-extranucleotides from tRNA precursor.. Functionally, RNaseP catalyzes the removal of the 5'-leader sequence from pre-tRNA to produce the mature 5'-terminus. It can also cleave other RNA substrates such as 4.5S RNA. The protein component plays an auxiliary but essential role in vivo by binding to the 5'-leader sequence and broadening the substrate specificity of the ribozyme. This chain is Ribonuclease P protein component, found in Bacillus cereus (strain G9842).